Reading from the N-terminus, the 401-residue chain is MNVLRMMDVPLKGKRVLIREDLNVPMNDAGAITDDTRIRASLPTIRAALASGARVMLMSHLGRPKEGVFDEKASLAPVAAHLSQLLGRDVPLVRDWLDAGKDRLAQLQDGDVVVLENVRFNTGESKDDEALSKKMAALCDVFVMDAFGTAHRAQASTHGVGKFAPVACAGPLLVNELDALGKALQNPRRPLVAIVAGSKVSTKLTILKSLADKVDQLVVGGGIANTFILAAGHSVGKSLCEADLVPDAQAIIAAARAKGGDVPLPSDVVVAKAFSETAPARTCRVDDIAADDMVLDIGPDTAKTLGDILRKAGTIVWNGPVGVFEFDAFAGGTEAIARAVAESSAFSIAGGGDTIAAINKFHIEDKVSYISTGGGAFLEFLEGKTLPAVAMLEERARGTHT.

Residues 21-23, arginine 37, 60-63, arginine 119, and arginine 152 contribute to the substrate site; these read DLN and HLGR. Residues lysine 203, glutamate 325, and 351–354 contribute to the ATP site; that span reads GGDT.

Belongs to the phosphoglycerate kinase family. In terms of assembly, monomer.

It localises to the cytoplasm. The enzyme catalyses (2R)-3-phosphoglycerate + ATP = (2R)-3-phospho-glyceroyl phosphate + ADP. It participates in carbohydrate degradation; glycolysis; pyruvate from D-glyceraldehyde 3-phosphate: step 2/5. This is Phosphoglycerate kinase from Acidithiobacillus ferrooxidans (strain ATCC 23270 / DSM 14882 / CIP 104768 / NCIMB 8455) (Ferrobacillus ferrooxidans (strain ATCC 23270)).